A 280-amino-acid chain; its full sequence is MDDDLKSIASKYYIGGHISVSGGLHLAPERASIFGFRTFQFFSKNQMRWNSTPISEEEALRFISEVSSHSISSTMVHASYLINLASSSNELHQKSFNAFVEEIQRAERIDATFLTFHPGSNGNKDEGIRKIKEAIEKVETHKVKLLVENTAGQGNVIGSTIYEIGQIIDGFDSSVGVCIDTCHAWAAGYDITNKYDEFIDELDSAIGLDRIYAFHLNDAMKDLGSNIDRHELIGRGKIGEGLIKLISDVRLFGKPKIMETPYGEAKFEENLKYIRKKLGE.

Residues H77, H117, E148, D180, H183, H215, D228, H230, and E259 each contribute to the Zn(2+) site.

The protein belongs to the AP endonuclease 2 family. Zn(2+) is required as a cofactor.

The catalysed reaction is Endonucleolytic cleavage to 5'-phosphooligonucleotide end-products.. Endonuclease IV plays a role in DNA repair. It cleaves phosphodiester bonds at apurinic or apyrimidinic (AP) sites, generating a 3'-hydroxyl group and a 5'-terminal sugar phosphate. The chain is Probable endonuclease 4 from Thermoplasma volcanium (strain ATCC 51530 / DSM 4299 / JCM 9571 / NBRC 15438 / GSS1).